A 75-amino-acid chain; its full sequence is Small ribosomal subunit protein bS18 (75 aa).

This sequence belongs to the bacterial ribosomal protein bS18 family. Part of the 30S ribosomal subunit. Forms a tight heterodimer with protein bS6.

Its function is as follows. Binds as a heterodimer with protein bS6 to the central domain of the 16S rRNA, where it helps stabilize the platform of the 30S subunit. The polypeptide is Small ribosomal subunit protein bS18 (Shewanella frigidimarina (strain NCIMB 400)).